The primary structure comprises 317 residues: Tumor-associated calcium signal transducer 2 (317 aa).

The N-terminal stretch at 1–24 is a signal peptide; the sequence is MARGLDLAPLLLLLLAMATRFCTA. Residues 25–270 are Extracellular-facing; it reads QSNCTCPTNK…QFSMKRLTAG (246 aa). A glycan (N-linked (GlcNAc...) asparagine) is linked at N27. Residues 64–139 enclose the Thyroglobulin type-1 domain; that stretch reads TSKCLLLKAR…TDKGDQSLRC (76 aa). 3 cysteine pairs are disulfide-bonded: C67–C102, C113–C119, and C121–C139. A glycan (N-linked (GlcNAc...) asparagine) is linked at N114. 2 N-linked (GlcNAc...) asparagine glycosylation sites follow: N162 and N202. A helical membrane pass occupies residues 271–291; sequence VIAVIAVVSVAVVAGVVVLVV. The Cytoplasmic portion of the chain corresponds to 292–317; sequence TKRRKSGKYKKVELKELGEMRSEPSL.

This sequence belongs to the EPCAM family. Expressed in kidney, lung, ovary and testis. High levels of expression in immortalized keratinocytes.

Its subcellular location is the membrane. May function as a growth factor receptor. The chain is Tumor-associated calcium signal transducer 2 (Tacstd2) from Mus musculus (Mouse).